Here is a 394-residue protein sequence, read N- to C-terminus: MSEFIAENRGADAITRPNWSAVFSVAFCVACLIIVEFLPVSLLTPMAQDLGISEGVAGQSVTVTAFVAMFASLFITQTIQATDRRYVVILFAVLLTISCLLVSFANSFSLLLIGRACLGLALGGFWAMSASLTMRLVPPRTVPKALSVIFGAVSIALVIAAPLGSFLGELIGWRNVFNAAAVMGVLCIFWIIKSLPSLPGKPSHQKQNTFRLLQRPGVMAGMIAIFMSFAGQFAFFTYIRPVYMNLAGFGVDGLTLVLLSFGIASFIGTSLSSFILKRSVKLALAGAPLILAVSALVLTLCGSDKIVATGVAIIWGLTFALVPVGWSTWSTRSLADQAEKAGSIQVAVIQLANTCGAAIGGYALDNIGLTSPLMLSGTLMLLTALLVTAKVKMK.

The Cytoplasmic segment spans residues 1 to 21; sequence MSEFIAENRGADAITRPNWSA. Residues 22-42 traverse the membrane as a helical segment; that stretch reads VFSVAFCVACLIIVEFLPVSL. The Periplasmic portion of the chain corresponds to 43–54; that stretch reads LTPMAQDLGISE. The chain crosses the membrane as a helical span at residues 55-75; sequence GVAGQSVTVTAFVAMFASLFI. The Cytoplasmic segment spans residues 76–85; the sequence is TQTIQATDRR. Residues 86 to 106 traverse the membrane as a helical segment; it reads YVVILFAVLLTISCLLVSFAN. Residue Ser107 is a topological domain, periplasmic. Residues 108-128 form a helical membrane-spanning segment; that stretch reads FSLLLIGRACLGLALGGFWAM. Topologically, residues 129–147 are cytoplasmic; it reads SASLTMRLVPPRTVPKALS. The chain crosses the membrane as a helical span at residues 148-168; it reads VIFGAVSIALVIAAPLGSFLG. Over 169 to 175 the chain is Periplasmic; that stretch reads ELIGWRN. A helical transmembrane segment spans residues 176 to 196; sequence VFNAAAVMGVLCIFWIIKSLP. Residues 197–215 are Cytoplasmic-facing; it reads SLPGKPSHQKQNTFRLLQR. A helical transmembrane segment spans residues 216–236; the sequence is PGVMAGMIAIFMSFAGQFAFF. The Periplasmic portion of the chain corresponds to 237 to 255; sequence TYIRPVYMNLAGFGVDGLT. Residues 256–276 traverse the membrane as a helical segment; the sequence is LVLLSFGIASFIGTSLSSFIL. Residues 277–281 lie on the Cytoplasmic side of the membrane; the sequence is KRSVK. A helical transmembrane segment spans residues 282 to 302; it reads LALAGAPLILAVSALVLTLCG. Residues 303–305 are Periplasmic-facing; that stretch reads SDK. A helical transmembrane segment spans residues 306 to 326; sequence IVATGVAIIWGLTFALVPVGW. Topologically, residues 327–343 are cytoplasmic; that stretch reads STWSTRSLADQAEKAGS. The helical transmembrane segment at 344–364 threads the bilayer; that stretch reads IQVAVIQLANTCGAAIGGYAL. Over 365 to 366 the chain is Periplasmic; the sequence is DN. A helical membrane pass occupies residues 367 to 387; it reads IGLTSPLMLSGTLMLLTALLV. The Cytoplasmic portion of the chain corresponds to 388-394; that stretch reads TAKVKMK.

The protein belongs to the major facilitator superfamily. DHA1 family. NepI (TC 2.A.1.2.26) subfamily.

It is found in the cell inner membrane. The enzyme catalyses inosine(in) + H(+)(out) = inosine(out) + H(+)(in). The catalysed reaction is guanosine(in) + H(+)(out) = guanosine(out) + H(+)(in). Functionally, involved in the efflux of purine ribonucleosides, such as inosine and guanosine. The polypeptide is Purine ribonucleoside efflux pump NepI (Shigella dysenteriae serotype 1 (strain Sd197)).